The following is a 515-amino-acid chain: 4-hydroxybenzoate brominase (decarboxylating) (515 aa).

Residues serine 13, glutamate 32, valine 40, phenylalanine 41, histidine 51, valine 102, and glutamine 364 each coordinate FAD.

It belongs to the FMO family. FAD is required as a cofactor.

It carries out the reaction 2 bromide + 4-hydroxybenzoate + 2 NADPH + 2 O2 + 5 H(+) = 2,4-dibromophenol + CO2 + 2 NADP(+) + 4 H2O. It catalyses the reaction bromide + 4-hydroxybenzoate + NADPH + O2 + 2 H(+) = 3-bromo-4-hydroxybenzoate + NADP(+) + 2 H2O. The enzyme catalyses 3-bromo-4-hydroxybenzoate + bromide + NADPH + O2 + 3 H(+) = 2,4-dibromophenol + CO2 + NADP(+) + 2 H2O. The catalysed reaction is 3,4-dihydroxybenzoate + 2 bromide + 2 NADPH + 2 O2 + 5 H(+) = 3,5-dibromobenzene-1,2-diol + CO2 + 2 NADP(+) + 4 H2O. It carries out the reaction 3,4-dihydroxybenzoate + bromide + NADPH + O2 + 2 H(+) = 3-bromo-4,5-dihydroxybenzoate + NADP(+) + 2 H2O. It catalyses the reaction 3-bromo-4,5-dihydroxybenzoate + bromide + NADPH + O2 + 3 H(+) = 3,5-dibromobenzene-1,2-diol + CO2 + NADP(+) + 2 H2O. Activity is abolished in the absence of either bromide or NADPH, while a partial reduction in activity is observed upon omission of FAD. Activity does not require the addition of a flavin reductase to regenerate FADH(2) in situ. Functionally, brominase involved in the biosynthesis of polybrominated aromatic organic compounds. Catalyzes the bromination of 4-hydroxybenzoate (4-HBA) to 3-bromo-4-hydroxybenzoate, followed by bromination and decarboxylation of 3-bromo-4-hydroxybenzoate to 2,4-dibromophenol. Can also use 3,4-dihydroxybenzoate, with lower efficiency, forming 3-bromo-4,5-dihydroxybenzoate and 3,5-dibromobenzene-1,2-diol. Can utilize iodide in vivo leading to the formation of iodophenols, but cannot use chloride. This Pseudoalteromonas luteoviolacea (strain 2ta16) protein is 4-hydroxybenzoate brominase (decarboxylating).